The following is a 493-amino-acid chain: UDP-N-acetylmuramoyl-L-alanyl-D-glutamate--2,6-diaminopimelate ligase (493 aa).

S30 is a UDP-N-acetyl-alpha-D-muramoyl-L-alanyl-D-glutamate binding site. 114-120 (GTNGKTS) lines the ATP pocket. Residues 156-157 (TT), S183, Q189, and R191 each bind UDP-N-acetyl-alpha-D-muramoyl-L-alanyl-D-glutamate. K223 bears the N6-carboxylysine mark. Residues R386, 410–413 (DNPR), G460, and E464 contribute to the meso-2,6-diaminopimelate site. The Meso-diaminopimelate recognition motif signature appears at 410-413 (DNPR).

Belongs to the MurCDEF family. MurE subfamily. The cofactor is Mg(2+). In terms of processing, carboxylation is probably crucial for Mg(2+) binding and, consequently, for the gamma-phosphate positioning of ATP.

The protein resides in the cytoplasm. It catalyses the reaction UDP-N-acetyl-alpha-D-muramoyl-L-alanyl-D-glutamate + meso-2,6-diaminopimelate + ATP = UDP-N-acetyl-alpha-D-muramoyl-L-alanyl-gamma-D-glutamyl-meso-2,6-diaminopimelate + ADP + phosphate + H(+). The protein operates within cell wall biogenesis; peptidoglycan biosynthesis. Its function is as follows. Catalyzes the addition of meso-diaminopimelic acid to the nucleotide precursor UDP-N-acetylmuramoyl-L-alanyl-D-glutamate (UMAG) in the biosynthesis of bacterial cell-wall peptidoglycan. This chain is UDP-N-acetylmuramoyl-L-alanyl-D-glutamate--2,6-diaminopimelate ligase, found in Chromobacterium violaceum (strain ATCC 12472 / DSM 30191 / JCM 1249 / CCUG 213 / NBRC 12614 / NCIMB 9131 / NCTC 9757 / MK).